We begin with the raw amino-acid sequence, 170 residues long: Cilia- and flagella-associated protein 276 (170 aa).

Disordered stretches follow at residues 1 to 37 (MPLT…PTHL) and 151 to 170 (HTAA…FFST).

In terms of assembly, microtubule inner protein component of sperm flagellar doublet microtubules. As to expression, expressed in trachea multiciliated cells.

The protein resides in the cytoplasm. The protein localises to the cytoskeleton. Its subcellular location is the cilium axoneme. It is found in the flagellum axoneme. In terms of biological role, microtubule inner protein (MIP) part of the dynein-decorated doublet microtubules (DMTs) in cilia axoneme, which is required for motile cilia beating. May play an important role for the maintenance of myelin-axon integrity. May affect intracellular Ca(2+) homeostasis. This chain is Cilia- and flagella-associated protein 276, found in Bos taurus (Bovine).